The chain runs to 274 residues: Diaminopimelate epimerase (274 aa).

Asparagine 11, glutamine 44, and asparagine 64 together coordinate substrate. The Proton donor role is filled by cysteine 73. Substrate is bound by residues 74–75 (GN), asparagine 157, asparagine 190, and 208–209 (ER). Residue cysteine 217 is the Proton acceptor of the active site. Position 218–219 (218–219 (GS)) interacts with substrate.

The protein belongs to the diaminopimelate epimerase family. As to quaternary structure, homodimer.

It is found in the cytoplasm. It carries out the reaction (2S,6S)-2,6-diaminopimelate = meso-2,6-diaminopimelate. It functions in the pathway amino-acid biosynthesis; L-lysine biosynthesis via DAP pathway; DL-2,6-diaminopimelate from LL-2,6-diaminopimelate: step 1/1. Catalyzes the stereoinversion of LL-2,6-diaminopimelate (L,L-DAP) to meso-diaminopimelate (meso-DAP), a precursor of L-lysine and an essential component of the bacterial peptidoglycan. In Enterobacter sp. (strain 638), this protein is Diaminopimelate epimerase.